The sequence spans 195 residues: dITP/XTP pyrophosphatase (195 aa).

8–13 (SGNAGK) provides a ligand contact to substrate. Mg(2+)-binding residues include glutamate 38 and aspartate 67. Aspartate 67 functions as the Proton acceptor in the catalytic mechanism. Substrate-binding positions include serine 68, 146–149 (FGYD), lysine 169, and 174–175 (HR).

This sequence belongs to the HAM1 NTPase family. In terms of assembly, homodimer. Mg(2+) is required as a cofactor.

The enzyme catalyses XTP + H2O = XMP + diphosphate + H(+). It carries out the reaction dITP + H2O = dIMP + diphosphate + H(+). The catalysed reaction is ITP + H2O = IMP + diphosphate + H(+). Pyrophosphatase that catalyzes the hydrolysis of nucleoside triphosphates to their monophosphate derivatives, with a high preference for the non-canonical purine nucleotides XTP (xanthosine triphosphate), dITP (deoxyinosine triphosphate) and ITP. Seems to function as a house-cleaning enzyme that removes non-canonical purine nucleotides from the nucleotide pool, thus preventing their incorporation into DNA/RNA and avoiding chromosomal lesions. This Parasynechococcus marenigrum (strain WH8102) protein is dITP/XTP pyrophosphatase.